We begin with the raw amino-acid sequence, 417 residues long: Paired box protein Pax-2 (417 aa).

The segment at residues 16–142 is a DNA-binding region (paired); it reads GHGGVNQLGG…SSINRIIRTK (127 aa). The segment at 19–75 is PAI subdomain; the sequence is GVNQLGGVFVNGRPLPDVVRQRIVELAHQGVRPCDISRQLRVSHGCVSKILGRYYET. The interval 94-142 is RED subdomain; that stretch reads KVVDKIAEYKRQNPTMFAWEIRDRLLAEGICDNDTVPSVSSINRIIRTK. Phosphothreonine is present on Thr-226. The interval 304–325 is disordered; the sequence is KSSLSASTNPELGSNVSGTQTY. The span at 305–325 shows a compositional bias: polar residues; it reads SSLSASTNPELGSNVSGTQTY.

As to quaternary structure, interacts with ELGN3; the interaction targets PAX2 for destruction. Interacts with TLE4. Expressed in primitive cells of the kidney, ureter, eye, ear and central nervous system.

Its subcellular location is the nucleus. Functionally, transcription factor that may have a role in kidney cell differentiation. Has a critical role in the development of the urogenital tract, the eyes, and the CNS. This Homo sapiens (Human) protein is Paired box protein Pax-2 (PAX2).